A 286-amino-acid polypeptide reads, in one-letter code: Acetylglutamate kinase (286 aa).

Substrate-binding positions include 69-70 (GG), Arg-91, and Asn-185.

It belongs to the acetylglutamate kinase family. ArgB subfamily.

Its subcellular location is the cytoplasm. The enzyme catalyses N-acetyl-L-glutamate + ATP = N-acetyl-L-glutamyl 5-phosphate + ADP. The protein operates within amino-acid biosynthesis; L-arginine biosynthesis; N(2)-acetyl-L-ornithine from L-glutamate: step 2/4. Its function is as follows. Catalyzes the ATP-dependent phosphorylation of N-acetyl-L-glutamate. This Chlorobium chlorochromatii (strain CaD3) protein is Acetylglutamate kinase.